A 406-amino-acid chain; its full sequence is 8-amino-7-oxononanoate synthase (406 aa).

Substrate is bound at residue arginine 20. 116 to 117 (GY) contributes to the pyridoxal 5'-phosphate binding site. Residue histidine 141 participates in substrate binding. Serine 187, histidine 215, and threonine 243 together coordinate pyridoxal 5'-phosphate. Residue lysine 246 is modified to N6-(pyridoxal phosphate)lysine. Residue threonine 366 participates in substrate binding.

The protein belongs to the class-II pyridoxal-phosphate-dependent aminotransferase family. BioF subfamily. Homodimer. Pyridoxal 5'-phosphate is required as a cofactor.

The catalysed reaction is 6-carboxyhexanoyl-[ACP] + L-alanine + H(+) = (8S)-8-amino-7-oxononanoate + holo-[ACP] + CO2. Its pathway is cofactor biosynthesis; biotin biosynthesis. Functionally, catalyzes the decarboxylative condensation of pimeloyl-[acyl-carrier protein] and L-alanine to produce 8-amino-7-oxononanoate (AON), [acyl-carrier protein], and carbon dioxide. The polypeptide is 8-amino-7-oxononanoate synthase (Cupriavidus metallidurans (strain ATCC 43123 / DSM 2839 / NBRC 102507 / CH34) (Ralstonia metallidurans)).